Reading from the N-terminus, the 326-residue chain is RNA/RNP complex-1-interacting phosphatase (326 aa).

The interval 1–28 (MNQWHYGRYSRGRDFTARAPPKKKGKNQ) is disordered. The 148-residue stretch at 59–206 (FEAKLMPEEC…LQKRRVRKNQ (148 aa)) folds into the Tyrosine-protein phosphatase domain. C150 acts as the Phosphocysteine intermediate in catalysis. Residue 151–156 (THGLNR) participates in substrate binding. The active-site Proton donor/acceptor is R156. The interval 200–258 (RRVRKNQNASASRSGGLEDSAHLTEQVHTTNKPVNKGPKKSRRGGHLESSQHVQTQSSA) is disordered. Over residues 247 to 258 (ESSQHVQTQSSA) the composition is skewed to polar residues.

Belongs to the protein-tyrosine phosphatase family. Non-receptor class dual specificity subfamily. In terms of assembly, monomer. May interact with SFRS7 and SFRS9/SRP30C.

It is found in the nucleus. The protein localises to the nucleus speckle. In terms of biological role, possesses RNA 5'-triphosphatase and diphosphatase activities, but displays a poor protein-tyrosine phosphatase activity. In addition, has phosphatase activity with ATP, ADP and O-methylfluorescein phosphate (in vitro). Binds to RNA. May participate in nuclear mRNA metabolism. The sequence is that of RNA/RNP complex-1-interacting phosphatase (Dusp11) from Rattus norvegicus (Rat).